The following is a 310-amino-acid chain: tRNA-cytidine(32) 2-sulfurtransferase (310 aa).

A PP-loop motif motif is present at residues 58–63 (SGGKDS). Positions 133, 136, and 224 each coordinate [4Fe-4S] cluster.

It belongs to the TtcA family. In terms of assembly, homodimer. The cofactor is Mg(2+). It depends on [4Fe-4S] cluster as a cofactor.

It is found in the cytoplasm. It carries out the reaction cytidine(32) in tRNA + S-sulfanyl-L-cysteinyl-[cysteine desulfurase] + AH2 + ATP = 2-thiocytidine(32) in tRNA + L-cysteinyl-[cysteine desulfurase] + A + AMP + diphosphate + H(+). Its pathway is tRNA modification. Functionally, catalyzes the ATP-dependent 2-thiolation of cytidine in position 32 of tRNA, to form 2-thiocytidine (s(2)C32). The sulfur atoms are provided by the cysteine/cysteine desulfurase (IscS) system. In Paracidovorax citrulli (strain AAC00-1) (Acidovorax citrulli), this protein is tRNA-cytidine(32) 2-sulfurtransferase.